The chain runs to 302 residues: Methionyl-tRNA formyltransferase (302 aa).

109-112 (SILP) contacts (6S)-5,6,7,8-tetrahydrofolate.

The protein belongs to the Fmt family.

It carries out the reaction L-methionyl-tRNA(fMet) + (6R)-10-formyltetrahydrofolate = N-formyl-L-methionyl-tRNA(fMet) + (6S)-5,6,7,8-tetrahydrofolate + H(+). Its function is as follows. Attaches a formyl group to the free amino group of methionyl-tRNA(fMet). The formyl group appears to play a dual role in the initiator identity of N-formylmethionyl-tRNA by promoting its recognition by IF2 and preventing the misappropriation of this tRNA by the elongation apparatus. The chain is Methionyl-tRNA formyltransferase from Campylobacter hominis (strain ATCC BAA-381 / DSM 21671 / CCUG 45161 / LMG 19568 / NCTC 13146 / CH001A).